Consider the following 73-residue polypeptide: MAKKDGVIEIEGVVTEALPNAMFRVELTNKHIVLAHISGKMRQHYIRILPEDRVVVELSPYDLTRGRIVYRYK.

The S1-like domain occupies 1–73; it reads MAKKDGVIEI…TRGRIVYRYK (73 aa).

It belongs to the IF-1 family. Component of the 30S ribosomal translation pre-initiation complex which assembles on the 30S ribosome in the order IF-2 and IF-3, IF-1 and N-formylmethionyl-tRNA(fMet); mRNA recruitment can occur at any time during PIC assembly.

Its subcellular location is the cytoplasm. Its function is as follows. One of the essential components for the initiation of protein synthesis. Stabilizes the binding of IF-2 and IF-3 on the 30S subunit to which N-formylmethionyl-tRNA(fMet) subsequently binds. Helps modulate mRNA selection, yielding the 30S pre-initiation complex (PIC). Upon addition of the 50S ribosomal subunit IF-1, IF-2 and IF-3 are released leaving the mature 70S translation initiation complex. The sequence is that of Translation initiation factor IF-1 from Arthrobacter sp. (strain FB24).